Reading from the N-terminus, the 470-residue chain is Ribosomal protein uS12 methylthiotransferase RimO (470 aa).

An MTTase N-terminal domain is found at 33 to 143; sequence NKIGFVSLGC…VLEHVHQYAP (111 aa). [4Fe-4S] cluster is bound by residues C42, C78, C107, C175, C179, and C182. In terms of domain architecture, Radical SAM core spans 161–398; the sequence is LTPKHYAYLK…MLVQQEISAA (238 aa). The 67-residue stretch at 401–467 folds into the TRAM domain; it reads QKRIGSTMQV…EYDLWGSILH (67 aa).

This sequence belongs to the methylthiotransferase family. RimO subfamily. [4Fe-4S] cluster serves as cofactor.

It localises to the cytoplasm. It catalyses the reaction L-aspartate(89)-[ribosomal protein uS12]-hydrogen + (sulfur carrier)-SH + AH2 + 2 S-adenosyl-L-methionine = 3-methylsulfanyl-L-aspartate(89)-[ribosomal protein uS12]-hydrogen + (sulfur carrier)-H + 5'-deoxyadenosine + L-methionine + A + S-adenosyl-L-homocysteine + 2 H(+). In terms of biological role, catalyzes the methylthiolation of an aspartic acid residue of ribosomal protein uS12. In Vibrio cholerae serotype O1 (strain ATCC 39315 / El Tor Inaba N16961), this protein is Ribosomal protein uS12 methylthiotransferase RimO.